We begin with the raw amino-acid sequence, 322 residues long: PI-PLC X domain-containing protein 3 (322 aa).

One can recognise a PI-PLC X-box domain in the interval 22 to 197 (TLHGIPLTNL…EYQVLVFYHN (176 aa)). Residues His37 and His114 contribute to the active site.

This chain is PI-PLC X domain-containing protein 3 (plcxd3), found in Danio rerio (Zebrafish).